The following is a 179-amino-acid chain: Large ribosomal subunit protein uL6 (179 aa).

Belongs to the universal ribosomal protein uL6 family. As to quaternary structure, part of the 50S ribosomal subunit.

In terms of biological role, this protein binds to the 23S rRNA, and is important in its secondary structure. It is located near the subunit interface in the base of the L7/L12 stalk, and near the tRNA binding site of the peptidyltransferase center. The chain is Large ribosomal subunit protein uL6 from Clostridium acetobutylicum (strain ATCC 824 / DSM 792 / JCM 1419 / IAM 19013 / LMG 5710 / NBRC 13948 / NRRL B-527 / VKM B-1787 / 2291 / W).